The chain runs to 55 residues: Large ribosomal subunit protein bL33 (55 aa).

Residues 1 to 11 (MAKSGRDKIKL) are compositionally biased toward basic and acidic residues. The interval 1-28 (MAKSGRDKIKLESTAGTGHFYTTTKNKR) is disordered. Positions 14–24 (TAGTGHFYTTT) are enriched in polar residues.

Belongs to the bacterial ribosomal protein bL33 family.

The chain is Large ribosomal subunit protein bL33 from Janthinobacterium sp. (strain Marseille) (Minibacterium massiliensis).